Consider the following 70-residue polypeptide: Aurein-3.1 (70 aa).

A signal peptide spans 1–22; sequence MAFLKKSLFLVLFLGLVSLSIC. The propeptide occupies 23-49; that stretch reads EKEKRQNEEDEDENEAANHEEGSEEKR. The segment at 27–48 is disordered; that stretch reads RQNEEDEDENEAANHEEGSEEK. The span at 38 to 48 shows a compositional bias: basic and acidic residues; the sequence is AANHEEGSEEK. Residue Ile-66 is modified to Isoleucine amide.

As to expression, expressed by the skin dorsal glands.

It is found in the secreted. Its subcellular location is the target cell membrane. Its function is as follows. Amphipathic alpha-helical antimicrobial peptide with weak to potent activity against Gram-positive bacteria, and no activity against Gram-negative bacteria. Probably acts by disturbing membrane functions with its amphipathic structure. Shows anticancer activity. This chain is Aurein-3.1, found in Ranoidea aurea (Green and golden bell frog).